A 371-amino-acid chain; its full sequence is 2-oxoadipate dioxygenase/decarboxylase, chloroplastic (371 aa).

The N-terminal 50 residues, 1–50 (MISLHSSAIKASLYGSFPSSLRSTLSVSFSAGSLIRLPSVGKRNLSVVVS), are a transit peptide targeting the chloroplast. The 2-oxoadipate site is built by histidine 113 and arginine 117. Residue histidine 113 participates in Fe(2+) binding. Histidine 250 is a Fe(2+) binding site. 2-oxoadipate contacts are provided by glutamine 296 and tyrosine 320. Fe(2+) is bound at residue glutamate 322.

It belongs to the 2-oxoadipate dioxygenase/decarboxylase family. Fe(2+) is required as a cofactor.

It is found in the plastid. It localises to the chloroplast. The enzyme catalyses 2-oxoadipate + O2 = (R)-2-hydroxyglutarate + CO2. It participates in amino-acid degradation. Functionally, catalyzes the decarboxylation and hydroxylation of 2-oxoadipate (2OA) to form D-2-hydroxyglutarate (D-2-HGA). Is involved in a D-lysine catabolic pathway. This is 2-oxoadipate dioxygenase/decarboxylase, chloroplastic from Arabidopsis thaliana (Mouse-ear cress).